A 353-amino-acid polypeptide reads, in one-letter code: Photosystem II protein D1 (353 aa).

An N-acetylthreonine modification is found at T2. At T2 the chain carries Phosphothreonine. The next 3 membrane-spanning stretches (helical) occupy residues 29-46, 118-133, and 142-156; these read YIGWFGVLMIPTLLTATS, HFLLGVACYMGREWEL, and WIAVAYSAPVAAATA. H118 is a chlorophyll a binding site. A pheophytin a-binding site is contributed by Y126. [CaMn4O5] cluster is bound by residues D170 and E189. Residues 197 to 218 traverse the membrane as a helical segment; it reads FHMLGVAGVFGGSLFSAMHGSL. Residue H198 coordinates chlorophyll a. A quinone-binding positions include H215 and 264-265; that span reads SF. Residue H215 coordinates Fe cation. H272 serves as a coordination point for Fe cation. A helical membrane pass occupies residues 274 to 288; it reads FLAAWPVVGIWFTAL. Residues H332, E333, D342, and A344 each contribute to the [CaMn4O5] cluster site. The propeptide occupies 345–353; sequence AVESPSING.

The protein belongs to the reaction center PufL/M/PsbA/D family. As to quaternary structure, PSII is composed of 1 copy each of membrane proteins PsbA, PsbB, PsbC, PsbD, PsbE, PsbF, PsbH, PsbI, PsbJ, PsbK, PsbL, PsbM, PsbT, PsbX, PsbY, PsbZ, Psb30/Ycf12, at least 3 peripheral proteins of the oxygen-evolving complex and a large number of cofactors. It forms dimeric complexes. The D1/D2 heterodimer binds P680, chlorophylls that are the primary electron donor of PSII, and subsequent electron acceptors. It shares a non-heme iron and each subunit binds pheophytin, quinone, additional chlorophylls, carotenoids and lipids. D1 provides most of the ligands for the Mn4-Ca-O5 cluster of the oxygen-evolving complex (OEC). There is also a Cl(-1) ion associated with D1 and D2, which is required for oxygen evolution. The PSII complex binds additional chlorophylls, carotenoids and specific lipids. is required as a cofactor. Post-translationally, tyr-161 forms a radical intermediate that is referred to as redox-active TyrZ, YZ or Y-Z. In terms of processing, C-terminally processed by CTPA; processing is essential to allow assembly of the oxygen-evolving complex and thus photosynthetic growth.

Its subcellular location is the plastid. The protein localises to the chloroplast thylakoid membrane. It carries out the reaction 2 a plastoquinone + 4 hnu + 2 H2O = 2 a plastoquinol + O2. Photosystem II (PSII) is a light-driven water:plastoquinone oxidoreductase that uses light energy to abstract electrons from H(2)O, generating O(2) and a proton gradient subsequently used for ATP formation. It consists of a core antenna complex that captures photons, and an electron transfer chain that converts photonic excitation into a charge separation. The D1/D2 (PsbA/PsbD) reaction center heterodimer binds P680, the primary electron donor of PSII as well as several subsequent electron acceptors. The polypeptide is Photosystem II protein D1 (Sinapis alba (White mustard)).